A 380-amino-acid polypeptide reads, in one-letter code: MPLDPVALTADLVRCPSVTPEEGGALVLLERILTEAGFDCRRVDRNGVPNLFARWGRKGANRTFGFNGHTDVVPVGDAAAWTRDPFGGEIADGWLWGRGATDMKSGVAAFVAAAVDFVQETPPDGAVILTITGDEEGDSVDGTTALLDWMATEGEAMTVCLVGEPTCPERLGEMMKIGRRGSMTAFFTARGVQGHSAYPHRAKNPVSAMARLIDRLASHELDKGTGHFDPSTLAVTTIDTGNPATNVIPALCRATVNIRFNDRHSGASLIRWLEQEAAEVAAETGVEIGLSAKISGESFLTPPGELSELVARAVEAETGLRPEPSTSGGTSDARFVRAHCPVVEFGLVGKTMHQVDERVEVAQIEPLKAIYKRILKDYFT.

Residue His69 participates in Zn(2+) binding. Residue Asp71 is part of the active site. Asp102 is a binding site for Zn(2+). Glu135 acts as the Proton acceptor in catalysis. Residues Glu136, Glu164, and His353 each coordinate Zn(2+).

The protein belongs to the peptidase M20A family. DapE subfamily. Homodimer. Zn(2+) is required as a cofactor. It depends on Co(2+) as a cofactor.

It carries out the reaction N-succinyl-(2S,6S)-2,6-diaminopimelate + H2O = (2S,6S)-2,6-diaminopimelate + succinate. The protein operates within amino-acid biosynthesis; L-lysine biosynthesis via DAP pathway; LL-2,6-diaminopimelate from (S)-tetrahydrodipicolinate (succinylase route): step 3/3. Its function is as follows. Catalyzes the hydrolysis of N-succinyl-L,L-diaminopimelic acid (SDAP), forming succinate and LL-2,6-diaminopimelate (DAP), an intermediate involved in the bacterial biosynthesis of lysine and meso-diaminopimelic acid, an essential component of bacterial cell walls. The protein is Succinyl-diaminopimelate desuccinylase of Cereibacter sphaeroides (strain ATCC 17025 / ATH 2.4.3) (Rhodobacter sphaeroides).